The primary structure comprises 998 residues: Collagen alpha-1(I) chain (998 aa).

A disordered region spans residues glycine 1 to proline 998. Proline 18, proline 21, proline 24, proline 33, proline 48, proline 63, proline 69, proline 78, and proline 84 each carry 4-hydroxyproline. The span at proline 26–methionine 39 shows a compositional bias: low complexity. Residues asparagine 51–glutamate 65 are compositionally biased toward basic and acidic residues. Lysine 87 is subject to 5-hydroxylysine; alternate. Lysine 87 is a glycosylation site (O-linked (Gal...) hydroxylysine; alternate). A Phosphoserine modification is found at serine 93. The span at aspartate 101–leucine 115 shows a compositional bias: low complexity. Residues proline 116, proline 122, proline 143, proline 152, proline 155, proline 182, proline 185, proline 197, proline 203, proline 212, proline 218, proline 221, and proline 236 each carry the 4-hydroxyproline modification. The span at proline 122–alanine 140 shows a compositional bias: low complexity. Residues proline 142–phenylalanine 154 are compositionally biased toward pro residues. Positions alanine 188–proline 238 are enriched in low complexity. A 5-hydroxylysine modification is found at lysine 239. 4-hydroxyproline is present on residues proline 245, proline 248, proline 260, proline 269, proline 284, proline 290, proline 299, and proline 305. Residues glycine 294–glycine 303 are compositionally biased toward gly residues. The residue at position 314 (lysine 314) is a 5-hydroxylysine. A 4-hydroxyproline mark is found at proline 323, proline 332, proline 338, proline 344, proline 353, proline 356, proline 365, proline 374, proline 380, proline 392, proline 401, proline 410, proline 413, proline 431, proline 449, proline 455, proline 461, proline 467, proline 473, proline 479, proline 491, proline 500, proline 511, proline 523, proline 526, proline 532, proline 538, and proline 547. Residues lysine 347–proline 401 are compositionally biased toward low complexity. A compositionally biased stretch (low complexity) spans glutamine 443–glutamine 470. Residues asparagine 513–glutamine 535 are compositionally biased toward low complexity. 5-hydroxylysine is present on lysine 559. 4-hydroxyproline is present on residues proline 565 and proline 580. A compositionally biased stretch (low complexity) spans threonine 592–alanine 606. Serine 595 carries the phosphoserine modification. 4-hydroxyproline occurs at positions 607, 613, 616, 625, 631, 649, 658, and 667. Low complexity predominate over residues alanine 619–alanine 646. Over residues proline 648–proline 660 the composition is skewed to pro residues. Lysine 670 is modified (5-hydroxylysine). Positions serine 675 to valine 691 are enriched in low complexity. 2 positions are modified to 4-hydroxyproline: proline 679 and proline 685. 3-hydroxyproline is present on proline 693. 4-hydroxyproline occurs at positions 694, 703, 706, 727, 736, 744, 753, 771, 780, 783, 789, 804, 810, 816, 825, and 831. Residues glutamate 720–glutamate 729 show a composition bias toward low complexity. The span at lysine 741–alanine 762 shows a compositional bias: low complexity. The span at proline 803–alanine 813 shows a compositional bias: pro residues. Positions proline 815–serine 830 are enriched in low complexity. At lysine 840 the chain carries 5-hydroxylysine. The segment covering proline 848 to valine 863 has biased composition (pro residues). 4-hydroxyproline is present on residues proline 851, proline 854, and proline 857. Over residues alanine 884–proline 898 the composition is skewed to low complexity. The segment covering arginine 899–isoleucine 913 has biased composition (basic and acidic residues). Residue lysine 902 is modified to 5-hydroxylysine. 5-hydroxylysine; alternate is present on lysine 914. The O-linked (Gal...) hydroxylysine; alternate glycan is linked to lysine 914. Proline 929, proline 932, proline 950, and proline 965 each carry 4-hydroxyproline. The span at proline 932–proline 965 shows a compositional bias: low complexity. Proline 970 is subject to 3-hydroxyproline. Proline 971 carries the post-translational modification 4-hydroxyproline. Positions valine 983–proline 998 are enriched in pro residues. Residue proline 985 is modified to 3-hydroxyproline. The residue at position 986 (proline 986) is a 4-hydroxyproline. Proline 988 is modified (3-hydroxyproline). Proline 989 is modified (4-hydroxyproline). 3-hydroxyproline is present on proline 991. Residues proline 992, proline 995, and proline 998 each carry the 4-hydroxyproline modification.

This sequence belongs to the fibrillar collagen family. Trimers of one alpha 2(I) and two alpha 1(I) chains. In terms of processing, contains mostly 4-hydroxyproline. Proline residues at the third position of the tripeptide repeating unit (G-X-Y) are hydroxylated in some or all of the chains. Post-translationally, contains 3-hydroxyproline at a few sites. This modification occurs on the first proline residue in the sequence motif Gly-Pro-Hyp, where Hyp is 4-hydroxyproline. Lysine residues at the third position of the tripeptide repeating unit (G-X-Y) are 5-hydroxylated in some or all of the chains. In terms of processing, O-glycosylated on hydroxylated lysine residues. The O-linked glycan consists of a Glc-Gal disaccharide. In terms of tissue distribution, expressed in bones.

The protein localises to the secreted. The protein resides in the extracellular space. It localises to the extracellular matrix. Its function is as follows. Type I collagen is a member of group I collagen (fibrillar forming collagen). The protein is Collagen alpha-1(I) chain of Glyptodon sp. (strain SLP-2019) (Giant armadillo).